Reading from the N-terminus, the 248-residue chain is UPF0524 protein C3orf70 homolog (248 aa).

Positions 169-248 are disordered; it reads KESDTPKLGH…EVIETMETTV (80 aa). Over residues 200–227 the composition is skewed to acidic residues; sequence SCDEDTEEGAELSSEEDYSPESSWEPDE.

It belongs to the UPF0524 family.

In terms of biological role, may play a role in neuronal and neurobehavioral development. In Mus musculus (Mouse), this protein is UPF0524 protein C3orf70 homolog.